A 1819-amino-acid chain; its full sequence is Gamma-tubulin complex component 6 (1819 aa).

3 disordered regions span residues 810–889, 929–951, and 1000–1023; these read SEAH…GARP, LPPSAPGEAPAAASTQPSRPQEY, and RETLLPSHPPRRAALEEGSSQPTE. 9 repeat units span residues 1027–1053, 1054–1080, 1081–1107, 1108–1134, 1135–1161, 1162–1188, 1189–1215, 1216–1242, and 1243–1269. The 9 X 27 AA tandem repeats stretch occupies residues 1027 to 1269; it reads GQVSGGGLPT…VSTRPRWNTH (243 aa). The disordered stretch occupies residues 1271-1412; the sequence is PIPPPHMVLG…EAEASAAEAQ (142 aa). Polar residues predominate over residues 1297-1314; it reads PPGHTSQSALSLGAQSTV. A compositionally biased stretch (low complexity) spans 1321 to 1335; it reads LPVEVGPSLSSPSSG. Over residues 1384-1398 the composition is skewed to polar residues; the sequence is WPLNSQEDTAAQSSP.

This sequence belongs to the TUBGCP family. As to quaternary structure, component of the gamma-tubulin ring complex (gTuRC) consisting of TUBGCP2, TUBGCP3, TUBGCP4, TUBGCP5 and TUBGCP6 and gamma-tubulin TUBG1 or TUBG2. TUBGCP2, TUBGCP3, TUBGCP4, TUBGCP5 and TUBGCP6 assemble in a 5:5:2:1:1 stoichiometry; each is associated with a gamma-tubulin, thereby arranging 14 gamma-tubulins in a helical manner. Gamma-tubulin at the first position is blocked by TUBGCP3 at the last position, allowing 13 protafilaments to grow into a microtubule. The gTuRC (via TUBGCP3 and TUBGCP6) interacts with ACTB and MZT1; the interactions form a luminal bridge that stabilizes the initial structure during complex assembly. The gTuRC (via TUBGCP2) interacts with MZT2A/MZT2B and CDK5RAP2 (via CM1 motif); the interactions play a role in gTuRC activation.

The protein resides in the cytoplasm. It is found in the cytoskeleton. Its subcellular location is the microtubule organizing center. It localises to the centrosome. In terms of biological role, component of the gamma-tubulin ring complex (gTuRC) which mediates microtubule nucleation. The gTuRC regulates the minus-end nucleation of alpha-beta tubulin heterodimers that grow into microtubule protafilaments, a critical step in centrosome duplication and spindle formation. The chain is Gamma-tubulin complex component 6 (TUBGCP6) from Homo sapiens (Human).